Here is a 940-residue protein sequence, read N- to C-terminus: UvrABC system protein A (940 aa).

An ATP-binding site is contributed by 31–38 (GLSGSGKS). The segment at 252 to 279 (CPHCGYSMRELEPRLFSFNNPAGACPTC) adopts a C4-type zinc-finger fold. ABC transporter domains follow at residues 309–586 (WDQK…PNSL) and 606–936 (KDAK…RFLK). 639–646 (GVSGSGKS) is a binding site for ATP. A C4-type zinc finger spans residues 739 to 765 (CEACQGDGVIKVEMHFLPDVYVPCDVC).

This sequence belongs to the ABC transporter superfamily. UvrA family. In terms of assembly, forms a heterotetramer with UvrB during the search for lesions.

The protein resides in the cytoplasm. In terms of biological role, the UvrABC repair system catalyzes the recognition and processing of DNA lesions. UvrA is an ATPase and a DNA-binding protein. A damage recognition complex composed of 2 UvrA and 2 UvrB subunits scans DNA for abnormalities. When the presence of a lesion has been verified by UvrB, the UvrA molecules dissociate. The sequence is that of UvrABC system protein A from Vibrio cholerae serotype O1 (strain ATCC 39315 / El Tor Inaba N16961).